A 100-amino-acid polypeptide reads, in one-letter code: Putative protein adenylyltransferase MJ0604 (100 aa).

The short motif at 29–43 (GSYARGDYTEESDID) is the GSX(10)DXD motif element. The Mg(2+) site is built by D41 and D43.

It belongs to the MntA antitoxin family. The cofactor is Mg(2+).

The enzyme catalyses L-tyrosyl-[protein] + ATP = O-(5'-adenylyl)-L-tyrosyl-[protein] + diphosphate. It catalyses the reaction O-(5'-adenylyl)-L-tyrosyl-[protein] + ATP = O-[5'-(adenylyl-(5'-&gt;3')-adenylyl)]-L-tyrosyl-[protein] + diphosphate. Putative antitoxin component of a putative type VII toxin-antitoxin (TA) system. Its cognate toxin might be MJ0605, which it might AMPylate. The protein is Putative protein adenylyltransferase MJ0604 of Methanocaldococcus jannaschii (strain ATCC 43067 / DSM 2661 / JAL-1 / JCM 10045 / NBRC 100440) (Methanococcus jannaschii).